Consider the following 311-residue polypeptide: Putative dihydroorotate dehydrogenase A (fumarate) (311 aa).

Residues lysine 45, 69 to 73, and asparagine 128 each bind substrate; that span reads NSMGL. Position 45-46 (45-46) interacts with FMN; sequence KT. Asparagine 128 provides a ligand contact to FMN. Cysteine 131 functions as the Nucleophile in the catalytic mechanism. Lysine 165 and valine 193 together coordinate FMN. 194–195 is a substrate binding site; sequence NS. Residues glycine 220, 248–249, and 270–271 contribute to the FMN site; these read GG and GT.

It belongs to the dihydroorotate dehydrogenase family. Type 1 subfamily. As to quaternary structure, homodimer. The cofactor is FMN.

Its subcellular location is the cytoplasm. The enzyme catalyses (S)-dihydroorotate + fumarate = orotate + succinate. It participates in pyrimidine metabolism; UMP biosynthesis via de novo pathway. In terms of biological role, catalyzes the conversion of dihydroorotate to orotate with fumarate as the electron acceptor. In Streptococcus equi subsp. equi (strain 4047), this protein is Putative dihydroorotate dehydrogenase A (fumarate) (pyrD).